The following is a 666-amino-acid chain: Peptidase S41 family protein phomP1 (666 aa).

The N-terminal stretch at 1 to 27 (MSSFLVQTAVVRLFLLGVVFWFPFALS) is a signal peptide. Asn-70, Asn-214, and Asn-234 each carry an N-linked (GlcNAc...) asparagine glycan. Residues 303 to 504 (DVAVLQITSF…LLQAQGVRTV (202 aa)) form a peptidase S41 domain region. Residues Asn-555 and Asn-612 are each glycosylated (N-linked (GlcNAc...) asparagine).

The protein belongs to the peptidase S41A family.

The protein operates within mycotoxin biosynthesis. Its function is as follows. Peptidase S41 family protein; part of the gene cluster that mediates the biosynthesis of the phomopsins, a group of hexapeptide mycotoxins which infects lupins and causes lupinosis disease in livestock. Within the pathway, phomP1 and phomP1' are probably involved in the processing of the phomA and phomA' precursors. The pathway starts with the processing of the precursor phomA by several endopeptidases including kexin proteases as well as the cluster-specific S41 family peptidase phomP1 and the oligopeptidase phomG to produce 10 identical copies of the hexapeptide Tyr-Val-Ile-Pro-Ile-Asp. After being excised from the precursor peptide, the core peptides are cyclized and modified post-translationally by enzymes encoded within the gene cluster. The timing and order of proteolysis of the phomA precursor and PTMs are still unknown. Two tyrosinase-like enzymes, phomQ1 and phomQ2, catalyze the chlorination and hydroxylation of Tyr, respectively. PhomYb, is proposed to be involved in the construction of the macrocyclic structure. The other 4 ustYa family proteins may be involved in PTMs that generate the unique structure of phomopsin A. PhomYa is required for the hydroxylation of C-beta of Tyr. PhomYc, phomYd, and phomYe are responsible for the biosynthesis of 2,3-dehydroisoleucine (dIle), 2,3-dehydroaspartic acid (dAsp), and 3,4-dehydroproline (dPro), respectively. While dIle formation by phomYc is indispensable for the installation of dAsp by phomYd, the order of the other PTMs have not been elucidated yet. Most of the biosynthetic enzymes likely have broad substrate specificity, and thus, there might be a metabolic grid from a precursor to phomopsin A. The enzyme(s) responsible for the biosynthesis of 3,4-dehydrovaline (dVal) have also not been identified yet. Finally, phomM acts as an S-adenosylmethionine-dependent alpha-N-methyltransferase that catalyzes two successive N-methylation reactions, converting N-desmethyl-phomopsin A to phomopsin A and phomopsin A further to an N,N-dimethylated congener called phomopsin E. The protein is Peptidase S41 family protein phomP1 of Diaporthe leptostromiformis (Lupinosis disease fungus).